We begin with the raw amino-acid sequence, 981 residues long: MTILCSCAQQQQQQQQDTEVITSSERTTYNFNVDWKFIKSNPKQAQDINYNDATWETISCPHTFNDVDTFDDLSHGHHDGEDNQWRGTVWYRKHFKLPKDDKGKKVFIEFESVRQIADVYINGVHLGQNQTGFIPFGFDLTPHLKFGEENIIAVKVNNDRGDHFRENFPLVWNHEHWHPTHGGIYRNVFLHTMDPLHITLPLYDNLETVGTYVYAENISEKSADITVETEIQNEHAENKNITLVTQIVDNDGAVVAHSNKNVAIPSGQKMKVTTVTNIQNPQLWYTRYPYMYKVVSAIKESNKVIDTYESPLGIRNFDFNKDSGFWINGEQIKLHGWGQKPTNAWAGLGAALPDWLRDFTFKLMDEAGGNFIRWGHCAASPAEVDMGDKYGFVTLMPGVSGESEDEGETWDIRYKAFKDLIVYYRNHPSIFIWEGGNWAESEAHYKEILEAIKTFDPKGKRLMGNRRADVKNDSEGYVSIEIGTEGWEREYPDLPIIESEYNREEAPRRIWDKNSPDDNFYNHPNISKNTYKLSSEEFAVRQADHWWNKMGKKAYHSGGANWIFSDGPHGGRCPTEVTRASGEVDAVRLPKEAFYALKAMWRPEPQVHIVGHWNYEVGTKKTMYVMSNCASVKLYVNDKLVGTNSNPENGYVFKFDNVAWESGKIKAEGFIDDALKTTQTKETTGEPAALKLTSITGPEGWLADGSDVALIDVEVVDAQGRRCPLAKGRVDFTISGPAIWRGGYNSGKPNSTNNLFLDIEAGINRVAVRSVLESGTVTIMAKKPGFKDVSVTLKSLPIDFNNGLTTTLPQVYTNVLTKEPLPEHIPEMPEYIPGVKNRSELFRKFSYTGDGKAMLRTNMHWGKKAYTDLEYNYTVLPRYLNESEYVRTPNSDNRYWARDQLQFIAGKKMHIYVLHDDTVPRPEFLLRDYEDTGDNVNVVGASMSVFHRVAEEGESIIMAGNSDGDAPENCRMYTVMVKEFK.

The active-site Nucleophile is the glutamate 500. The Mg(2+) site is built by asparagine 561, tryptophan 562, isoleucine 563, serine 581, and glutamate 583.

Belongs to the glycosyl hydrolase 2 family.

The protein resides in the periplasm. It carries out the reaction a beta-D-glucuronoside + H2O = D-glucuronate + an alcohol. Beta-glucuronidase involved in ulvan degradation. Ulvan is the main polysaccharide component of the Ulvales (green seaweed) cell wall. It is composed of disaccharide building blocks comprising 3-sulfated rhamnose (Rha3S) linked to D-glucuronic acid (GlcA), L-iduronic acid (IduA), or D-xylose (Xyl). Beta-glucuronidase removes GlcA side chains present on some O2 residues of Rha3S. Can remove the GlcA side chains from polymeric ulvan or from smaller oligomers. This chain is Beta-glucuronidase, found in Formosa agariphila (strain DSM 15362 / KCTC 12365 / LMG 23005 / KMM 3901 / M-2Alg 35-1).